The chain runs to 217 residues: Somatotropin (217 aa).

Positions 1-26 (MMAAGPRTSLLLAFALLCLPWTQVVG) are cleaved as a signal peptide. Histidine 46 lines the Zn(2+) pocket. Cysteine 79 and cysteine 190 are oxidised to a cystine. Serine 132 is modified (phosphoserine). Glutamate 199 provides a ligand contact to Zn(2+). The cysteines at positions 207 and 215 are disulfide-linked.

Belongs to the somatotropin/prolactin family.

Its subcellular location is the secreted. Functionally, plays an important role in growth control. Its major role in stimulating body growth is to stimulate the liver and other tissues to secrete IGF1. It stimulates both the differentiation and proliferation of myoblasts. It also stimulates amino acid uptake and protein synthesis in muscle and other tissues. The sequence is that of Somatotropin (GH1) from Bubalus bubalis (Domestic water buffalo).